Consider the following 199-residue polypeptide: Phosphoheptose isomerase (199 aa).

In terms of domain architecture, SIS spans Met-36 to Asp-198. Asn-51–Gly-53 serves as a coordination point for substrate. Zn(2+)-binding residues include His-60 and Glu-64. Substrate contacts are provided by residues Glu-64, Asn-93–Asp-94, Ser-119–Ser-121, Ser-124, and Gln-174. Zn(2+) contacts are provided by Gln-174 and His-182.

This sequence belongs to the SIS family. GmhA subfamily. As to quaternary structure, homotetramer. Zn(2+) serves as cofactor.

The protein resides in the cytoplasm. It catalyses the reaction 2 D-sedoheptulose 7-phosphate = D-glycero-alpha-D-manno-heptose 7-phosphate + D-glycero-beta-D-manno-heptose 7-phosphate. The protein operates within carbohydrate biosynthesis; D-glycero-D-manno-heptose 7-phosphate biosynthesis; D-glycero-alpha-D-manno-heptose 7-phosphate and D-glycero-beta-D-manno-heptose 7-phosphate from sedoheptulose 7-phosphate: step 1/1. In terms of biological role, catalyzes the isomerization of sedoheptulose 7-phosphate in D-glycero-D-manno-heptose 7-phosphate. The protein is Phosphoheptose isomerase of Coxiella burnetii (strain RSA 331 / Henzerling II).